Here is a 117-residue protein sequence, read N- to C-terminus: Peptidyl-tRNA hydrolase (117 aa).

This sequence belongs to the PTH2 family.

It is found in the cytoplasm. The enzyme catalyses an N-acyl-L-alpha-aminoacyl-tRNA + H2O = an N-acyl-L-amino acid + a tRNA + H(+). The natural substrate for this enzyme may be peptidyl-tRNAs which drop off the ribosome during protein synthesis. The chain is Peptidyl-tRNA hydrolase from Metallosphaera sedula (strain ATCC 51363 / DSM 5348 / JCM 9185 / NBRC 15509 / TH2).